The chain runs to 194 residues: Peptidyl-tRNA hydrolase (194 aa).

Tyrosine 17 is a binding site for tRNA. Catalysis depends on histidine 22, which acts as the Proton acceptor. TRNA contacts are provided by phenylalanine 68, asparagine 70, and asparagine 116.

It belongs to the PTH family. Monomer.

It is found in the cytoplasm. It carries out the reaction an N-acyl-L-alpha-aminoacyl-tRNA + H2O = an N-acyl-L-amino acid + a tRNA + H(+). Hydrolyzes ribosome-free peptidyl-tRNAs (with 1 or more amino acids incorporated), which drop off the ribosome during protein synthesis, or as a result of ribosome stalling. Its function is as follows. Catalyzes the release of premature peptidyl moieties from peptidyl-tRNA molecules trapped in stalled 50S ribosomal subunits, and thus maintains levels of free tRNAs and 50S ribosomes. This is Peptidyl-tRNA hydrolase from Proteus mirabilis (strain HI4320).